A 284-amino-acid polypeptide reads, in one-letter code: MPTVQSTCWVFTLNFKGEIPILPFNERVQYACWQHERVGHDHLQGFIQMKAQQSLGQMKAIIPGAHFEKMRALNSDQAKAYAMKEDTRIEGPWEYGKYIKKGSHKRKIMERFEDDPEEMKIEDPSLYRRCLSRKMTEEQRSTAEWNYDMKPWQDQVIQEIEETPDYRKIIWVYGPKGGEGKSTFARYLSLKQGWGYLPGGPTHDMLHIISGEPKNNWVFDIPRVASEYVNYGVLEQVKNRVMVNTKYEPIVIRDDNHPVHVIVFANCMPDFTKISEDRMKIVHC.

A CRESS-DNA virus Rep endonuclease domain is found at 3-98; that stretch reads TVQSTCWVFT…IEGPWEYGKY (96 aa). The short motif at 10–13 is the RCR-1 element; that stretch reads VFTL. A divalent metal cation is bound by residues Glu36 and His42. The RCR-2 motif lies at 42-44; that stretch reads HLQ. A Nuclear localization signal motif is present at residues 51–71; sequence AQQSLGQMKAIIPGAHFEKMR. Catalysis depends on Tyr81, which acts as the For DNA cleavage activity. Positions 81–84 match the RCR-3 motif; it reads YAMK. Asp86 is an a divalent metal cation binding site. The Nuclear localization signal motif lies at 98 to 104; it reads YIKKGSH. Position 174 to 182 (174 to 182) interacts with ATP; it reads GPKGGEGKS.

Belongs to the nanoviridea/circoviridae replication-associated protein family. In terms of assembly, homooligomer (Potential). Rep binds to repeated DNA motifs (iterons). Mg(2+) is required as a cofactor. It depends on Mn(2+) as a cofactor.

Its subcellular location is the host nucleus. The enzyme catalyses ATP + H2O = ADP + phosphate + H(+). Initiates and terminates the replication only of its own subviral DNA molecule. The closed circular ssDNA genome is first converted to a superhelical dsDNA. Rep binds a specific hairpin at the genome origin of replication. Introduces an endonucleolytic nick within the intergenic region of the genome, thereby initiating the rolling circle replication (RCR). Following cleavage, binds covalently to the 5'-phosphate of DNA as a tyrosyl ester. The cleavage gives rise to a free 3'-OH that serves as a primer for the cellular DNA polymerase. The polymerase synthesizes the (+) strand DNA by rolling circle mechanism. After one round of replication, a Rep-catalyzed nucleotidyl transfer reaction releases a circular single-stranded virus genome, thereby terminating the replication. Displays origin-specific DNA cleavage, nucleotidyl transferase, ATPase and helicase activities. This is Para-Rep C3 (C3) from Milk vetch dwarf C3 alphasatellite (MVDC3A).